Reading from the N-terminus, the 172-residue chain is Chorion protein S18 (172 aa).

An N-terminal signal peptide occupies residues 1–17; it reads MMKFMCICLCAISAVSA.

It belongs to the chorion protein S15/S18 family.

It is found in the secreted. In terms of biological role, chorion membrane (egg shell) protein; plays a role in protecting the egg from the environment. This Drosophila melanogaster (Fruit fly) protein is Chorion protein S18 (Cp18).